Here is an 83-residue protein sequence, read N- to C-terminus: Protein MATERNALLY EXPRESSED GENE 3 (83 aa).

The first 22 residues, 1 to 22 (MQWLAFVAPRWRCVCDQELSAQ), serve as a signal peptide directing secretion. An intrachain disulfide couples Cys60 to Cys82.

It belongs to the MEG family. In terms of tissue distribution, expressed in endosperm, anther and pollen.

The chain is Protein MATERNALLY EXPRESSED GENE 3 (MEG3) from Zea mays (Maize).